A 278-amino-acid polypeptide reads, in one-letter code: Large ribosomal subunit protein uL24m (278 aa).

Positions 109–142 (FFPGDLVQVMVGKDKGRQGLVLTTSRDSSDVIVD) constitute a KOW domain.

Belongs to the universal ribosomal protein uL24 family.

It is found in the mitochondrion. In Caenorhabditis elegans, this protein is Large ribosomal subunit protein uL24m (mrpl-24).